Reading from the N-terminus, the 356-residue chain is UDP-3-O-acylglucosamine N-acyltransferase (356 aa).

The active-site Proton acceptor is the H251.

It belongs to the transferase hexapeptide repeat family. LpxD subfamily. As to quaternary structure, homotrimer.

It carries out the reaction a UDP-3-O-[(3R)-3-hydroxyacyl]-alpha-D-glucosamine + a (3R)-hydroxyacyl-[ACP] = a UDP-2-N,3-O-bis[(3R)-3-hydroxyacyl]-alpha-D-glucosamine + holo-[ACP] + H(+). It participates in bacterial outer membrane biogenesis; LPS lipid A biosynthesis. Catalyzes the N-acylation of UDP-3-O-acylglucosamine using 3-hydroxyacyl-ACP as the acyl donor. Is involved in the biosynthesis of lipid A, a phosphorylated glycolipid that anchors the lipopolysaccharide to the outer membrane of the cell. This Ralstonia nicotianae (strain ATCC BAA-1114 / GMI1000) (Ralstonia solanacearum) protein is UDP-3-O-acylglucosamine N-acyltransferase.